A 247-amino-acid polypeptide reads, in one-letter code: UPF0246 protein LSEI_2080 (247 aa).

Belongs to the UPF0246 family.

The polypeptide is UPF0246 protein LSEI_2080 (Lacticaseibacillus paracasei (strain ATCC 334 / BCRC 17002 / CCUG 31169 / CIP 107868 / KCTC 3260 / NRRL B-441) (Lactobacillus paracasei)).